The primary structure comprises 272 residues: MQWNVPRTVSRLARRTCLEPHNAGLFGHCQNVKGPLLLYNAESKVVLVQGPQKQWLHLSAAQCVAKERRPLDAHPPQPGVLRHKQGKQHVSFRRVFSSSATAQGTPEKKEEPDPLQDKSISLYQRFKKTFRQYGKVLIPVHLITSGVWFGTFYYAALKGVNVVPFLELIGLPDSVVSILKNSQSGNALTAYALFKIATPARYTVTLGGTSVTVKYLRSHGYMSTPPPVKEYLQDRMEETKELITEKMEETKDRLTEKLQETKEKVSFKKKVE.

The DUF1279 domain maps to 117–229 (DKSISLYQRF…GYMSTPPPVK (113 aa)). The helical transmembrane segment at 136–156 (VLIPVHLITSGVWFGTFYYAA) threads the bilayer. Positions 229 to 271 (KEYLQDRMEETKELITEKMEETKDRLTEKLQETKEKVSFKKKV) form a coiled coil. The interval 246–272 (KMEETKDRLTEKLQETKEKVSFKKKVE) is disordered.

It belongs to the FAM210 family. As to quaternary structure, interacts with ATAD3A.

It localises to the membrane. The protein resides in the mitochondrion. It is found in the cytoplasm. Its function is as follows. May play a role in the structure and strength of both muscle and bone. The protein is Protein FAM210A (FAM210A) of Homo sapiens (Human).